The primary structure comprises 149 residues: Transcriptional repressor NrdR (149 aa).

The segment at 3-34 is a zinc-finger region; the sequence is CPFCTAKDTKVIDSRLVGGGHQVRRRRECNDC. The ATP-cone domain occupies 49 to 139; sequence PRVIKQDGSR…VYRSFEDIRE (91 aa).

The protein belongs to the NrdR family. Requires Zn(2+) as cofactor.

In terms of biological role, negatively regulates transcription of bacterial ribonucleotide reductase nrd genes and operons by binding to NrdR-boxes. This is Transcriptional repressor NrdR from Pseudoalteromonas translucida (strain TAC 125).